Consider the following 596-residue polypeptide: MKSLSFISLACLTAVHAASVTFKVIAPTAESSVQVNINGQLTQLKAQDEDIPYYTGSAELNDGQSYKYVVDGAAETFERILNGTSTKNEFFNRPITYATNIPELPNILSEGSWTRGETTDPLWDSNYVPSIFVTGKSDEMEDLITNVTKKTYQAKITFIGPENITTIENCTFGLHKPGRKHNDAKQTWVWTLPEGQYVAKRSWFKIRHMEEDPTQLREKLYADIARKMGTYANEANMVRFFINKEGMGTFNMLDDVIMYSYINAMFYNGNPPQQLGALYDGASGAAFNASGDMDSFIPNVESPLDQDALMPFSKAFAAVDFSNDDQVKAISQYFDYDQFLRFMVMEFLTADWDGYWQEQTNDGAYIDVSDNNKVYYLAQDFDATFGVNLDQERDFVNTPYTDFPTKFPGGILINKLLENPTTKATFETYLKTTVQEIFNNATLGAYVTARHNFLAPDLKWDRSIKQRSPGNIFGWTYEQTYQNLFEGVTAPGKEQGGAEWGLLEWVAAKEKAVRSSLKLSETATTSTSATIAAPATSESASQDNTSDDTDSASTSSSTLNQAAADTSSASKSAPTFYCLQLVLYLSLSFKNLYKYI.

The signal sequence occupies residues 1–17 (MKSLSFISLACLTAVHA). 7 N-linked (GlcNAc...) asparagine glycosylation sites follow: Asn-82, Asn-146, Asn-163, Asn-169, Asn-288, Asn-440, and Asn-544. The span at 528 to 544 (SATIAAPATSESASQDN) shows a compositional bias: low complexity. Residues 528-557 (SATIAAPATSESASQDNTSDDTDSASTSSS) form a disordered region. Ser-567 carries GPI-anchor amidated serine lipidation. Residues 568–596 (SASKSAPTFYCLQLVLYLSLSFKNLYKYI) constitute a propeptide, removed in mature form.

In terms of assembly, interacts with host integrin beta-1 ITGB1 on the cell surface of host alveolar epithelial cells.

It localises to the cell membrane. Functionally, promotes invasion of host epithelial cells by adhering to receptors on the host cell surface to facilitate endocytosis of the pathogen into host cells. Probably binds integrin ITGA3:ITGB1 via ITGB1, on the cell surface of host alveolar epithelial cells. This is Invasin CotH7 from Rhizopus delemar (strain RA 99-880 / ATCC MYA-4621 / FGSC 9543 / NRRL 43880) (Mucormycosis agent).